Here is a 236-residue protein sequence, read N- to C-terminus: uncharacterized protein (236 aa).

An RPE1 insert domain is found at 117 to 160; the sequence is RYLSKQTDRNEFITTAESYIGISKHKSTNITYKLPLKEQFCNMS.

This is an uncharacterized protein from Rickettsia prowazekii (strain Madrid E).